Here is a 178-residue protein sequence, read N- to C-terminus: Zinc finger protein ZAT11 (178 aa).

2 C2H2-type zinc fingers span residues 47–69 (FECK…RASH) and 94–116 (HKCS…MRRH).

Expressed in leaves.

The protein localises to the nucleus. Functionally, probable transcription factor that may be involved in stress responses. This is Zinc finger protein ZAT11 (ZAT11) from Arabidopsis thaliana (Mouse-ear cress).